Reading from the N-terminus, the 301-residue chain is Formylmethanofuran--tetrahydromethanopterin formyltransferase-like protein (301 aa).

The protein belongs to the FTR family.

This chain is Formylmethanofuran--tetrahydromethanopterin formyltransferase-like protein, found in Archaeoglobus fulgidus (strain ATCC 49558 / DSM 4304 / JCM 9628 / NBRC 100126 / VC-16).